The following is a 220-amino-acid chain: Ribose-5-phosphate isomerase A (220 aa).

Residues 28–31 (TGST), 81–84 (DGAD), and 94–97 (KGGG) contribute to the substrate site. Glu-103 serves as the catalytic Proton acceptor. Lys-121 contributes to the substrate binding site.

The protein belongs to the ribose 5-phosphate isomerase family. In terms of assembly, homodimer.

The catalysed reaction is aldehydo-D-ribose 5-phosphate = D-ribulose 5-phosphate. Its pathway is carbohydrate degradation; pentose phosphate pathway; D-ribose 5-phosphate from D-ribulose 5-phosphate (non-oxidative stage): step 1/1. Functionally, catalyzes the reversible conversion of ribose-5-phosphate to ribulose 5-phosphate. The protein is Ribose-5-phosphate isomerase A of Shewanella baltica (strain OS223).